The following is a 417-amino-acid chain: Acetate kinase (417 aa).

Asn-7 lines the Mg(2+) pocket. Lys-14 lines the ATP pocket. Residue Arg-104 participates in substrate binding. The Proton donor/acceptor role is filled by Asp-162. Residues 222 to 226 (HLGNG), 297 to 299 (DMR), and 346 to 350 (GIGEN) contribute to the ATP site. Glu-401 serves as a coordination point for Mg(2+).

It belongs to the acetokinase family. As to quaternary structure, homodimer. Mg(2+) is required as a cofactor. Mn(2+) serves as cofactor.

It is found in the cytoplasm. It carries out the reaction acetate + ATP = acetyl phosphate + ADP. Its pathway is metabolic intermediate biosynthesis; acetyl-CoA biosynthesis; acetyl-CoA from acetate: step 1/2. In terms of biological role, catalyzes the formation of acetyl phosphate from acetate and ATP. Can also catalyze the reverse reaction. The sequence is that of Acetate kinase from Chloroherpeton thalassium (strain ATCC 35110 / GB-78).